A 266-amino-acid chain; its full sequence is MWCKDPFLTYLKEFGYNVIRLPKADVKPLQVLARCGKDLNRLGEINNLLVAGDSIPLPRLKENTRAASISGQRTGDLSVGVGLSILGTVLGAMGGSKLGLDTKYQNAKTTMFEFQDVFEDTVEIIELDKFLGDADINPFSRHVAELLEADDLYITTSTIKSTKFTIEAKKSDGTALELTIPDIQGIVGGNVKVSGAASVTSKICYESPIPLVFGFQAVRLFYDNGRYTAIEPLDSGSAGMKALGKAPSDGAARLMTDGPFLRLTGV.

Cys-3 is lipidated: S-palmitoyl cysteine. 4 beta stranded membrane-spanning segments follow: residues 69-85 (ISGQRTGDLSVGVGLSI), 97-115 (KLGLDTKYQNAKTTMFEFQ), 163-180 (KFTIEAKKSDGTALELTI), and 189-205 (GNVKVSGAASVTSKICY).

Belongs to the bacterial gasdermin family. As to quaternary structure, monomer. Forms large, homooligomeric ring-shaped pores when inserted in membranes. Palmitoylation helps stabilize the inactive state; may self palmitoylate. Palmitoylation plays a significant role in pore formation.

It localises to the cytoplasm. It is found in the cell inner membrane. With respect to regulation, the full-length protein before cleavage is inactive: intramolecular interactions between the N-terminal domain and the C-terminal region as well as the lipid modification, mediate autoinhibition. The pyroptosis-like-inducing activity is carried by the released N-terminal domain (Gasdermin bGSDM, N-terminus). In terms of biological role, precursor of a pore-forming protein involved in defense against bacteriophages. Expression of bGSDM and the neighboring protease gene (Ga0182885_104520) is toxic in E.coli. Cleavage of this precursor by its dedicated protease releases the active moiety (gasdermin bGSDM, N-terminus) which inserts into membranes, forming pores and triggering cell death. Its function is as follows. Pore-forming protein that causes membrane permeabilization via a pyroptosis-like activity. Makes ring-like pores when released. In Desulfuromonadales bacterium, this protein is Gasdermin bGSDM.